Consider the following 629-residue polypeptide: tRNA uridine 5-carboxymethylaminomethyl modification enzyme MnmG (629 aa).

FAD is bound by residues 15-20 (GAGHAG), valine 127, and serine 182. The interval 203-226 (TPPRVKSSTIDYSKTEEQPGDDHP) is disordered. Residues 215–226 (SKTEEQPGDDHP) are compositionally biased toward basic and acidic residues. 274–288 (GARYCPSIEDKIVRF) provides a ligand contact to NAD(+). Residue glutamine 371 coordinates FAD.

This sequence belongs to the MnmG family. Homodimer. Heterotetramer of two MnmE and two MnmG subunits. It depends on FAD as a cofactor.

It localises to the cytoplasm. Its function is as follows. NAD-binding protein involved in the addition of a carboxymethylaminomethyl (cmnm) group at the wobble position (U34) of certain tRNAs, forming tRNA-cmnm(5)s(2)U34. The protein is tRNA uridine 5-carboxymethylaminomethyl modification enzyme MnmG of Listeria monocytogenes serovar 1/2a (strain ATCC BAA-679 / EGD-e).